We begin with the raw amino-acid sequence, 507 residues long: MEDIQPTVELKSTEEQPLPTESPDALNDYSLPKPHEIENVDSREAPANEDEDAGEDSMKVKDEYSDRDENIMKPEPMGDAEESEMPYSYAREYSDYESIKLERHVPYDNSRPTGGKMNCDVCGLSCISFNVLMVHKRSHTGERPFQCNQCGASFTQKGNLLRHIKLHTGEKPFKCHLCNYACQRRDALTGHLRTHSVEKPYKCEFCGRSYKQRSSLEEHKERCRAFLQNPDLGDAASVEARHIKAEMGSERALVLDRLASNVAKRKSSMPQKFIGEKRHCFDANYNPGYMYEKENEMMQTRMMDQAINNAISYLGAEALRPLVQTPPAPTSEMVPVISSVYPIALTRADMPNGAPQEMEKKRILLPEKILPSERGLSPNNSAQDSTDTDSNHEDRQHLYQQSHVVLPQARNGMPLLKEVPRSFELLKPPPICLRDSIKVINKEGEVMDVFRCDHCHVLFLDYVMFTIHMGCHGFRDPFECNMCGYRSHDRYEFSSHIARGEHRAMLK.

The segment at 1 to 85 (MEDIQPTVEL…PMGDAEESEM (85 aa)) is disordered. Threonine 20 bears the Phosphothreonine mark. Residues serine 22 and serine 42 each carry the phosphoserine modification. 2 stretches are compositionally biased toward basic and acidic residues: residues 33–46 (KPHEIENVDSREAP) and 56–72 (DSMKVKDEYSDRDENIM). Glycyl lysine isopeptide (Lys-Gly) (interchain with G-Cter in SUMO2) cross-links involve residues lysine 61, lysine 73, and lysine 100. C2H2-type zinc fingers lie at residues 117 to 139 (MNCDVCGLSCISFNVLMVHKRSH), 145 to 167 (FQCNQCGASFTQKGNLLRHIKLH), and 173 to 195 (FKCHLCNYACQRRDALTGHLRTH). The segment at 201 to 223 (YKCEFCGRSYKQRSSLEEHKERC) adopts a C2H2-type 4; atypical zinc-finger fold. Lysine 244 participates in a covalent cross-link: Glycyl lysine isopeptide (Lys-Gly) (interchain with G-Cter in SUMO2). Residue threonine 325 is modified to Phosphothreonine. Positions 370–396 (LPSERGLSPNNSAQDSTDTDSNHEDRQ) are disordered. Residue serine 377 is modified to Phosphoserine. The C2H2-type 5 zinc finger occupies 450 to 472 (FRCDHCHVLFLDYVMFTIHMGCH). Positions 450–502 (FRCDHCHVLFLDYVMFTIHMGCHGFRDPFECNMCGYRSHDRYEFSSHIARGEH) are mediates homodimerization and heterodimerization. The segment at 478–502 (FECNMCGYRSHDRYEFSSHIARGEH) adopts a C2H2-type 6; atypical zinc-finger fold.

Belongs to the Ikaros C2H2-type zinc-finger protein family. As to quaternary structure, homodimer. Heterodimer with other IKAROS family members. Interacts with IKZF4 and IKZF5. Interacts with HRAS. Interacts with FOXP3; this interaction may be required for silencing target genes and regulating the suppressive activity of FOXP3-positive regulatory T-cells (Treg). Interacts with BCL21L isoform Bcl-X(L); this interaction blocks the anti-apoptotic role of BCL21L. Associates with histone deacetylase complexes containing HDAC1, MTA2 and SIN3A. Interacts with IKZF1. Expression is restricted to lymphoid tissues. Expressed at highest levels in spleen and at lower levels in the thymus and bone marrow. First detected in more committed lymphoid progenitors and strongly up-regulated as these differentiate into pre-T and pre-B cell precursors.

The protein resides in the nucleus. It localises to the cytoplasm. Transcription factor that plays an important role in the regulation of lymphocyte differentiation. Binds to GGGAA. Plays an essential role in regulation of B-cell differentiation, proliferation and maturation to an effector state. Involved in regulating BCL2 expression and controlling apoptosis in T-cells in an IL2-dependent manner. This chain is Zinc finger protein Aiolos (Ikzf3), found in Mus musculus (Mouse).